The primary structure comprises 257 residues: Imidazole glycerol phosphate synthase subunit HisF (257 aa).

Active-site residues include aspartate 11 and aspartate 130.

The protein belongs to the HisA/HisF family. In terms of assembly, heterodimer of HisH and HisF.

It is found in the cytoplasm. The enzyme catalyses 5-[(5-phospho-1-deoxy-D-ribulos-1-ylimino)methylamino]-1-(5-phospho-beta-D-ribosyl)imidazole-4-carboxamide + L-glutamine = D-erythro-1-(imidazol-4-yl)glycerol 3-phosphate + 5-amino-1-(5-phospho-beta-D-ribosyl)imidazole-4-carboxamide + L-glutamate + H(+). It functions in the pathway amino-acid biosynthesis; L-histidine biosynthesis; L-histidine from 5-phospho-alpha-D-ribose 1-diphosphate: step 5/9. Functionally, IGPS catalyzes the conversion of PRFAR and glutamine to IGP, AICAR and glutamate. The HisF subunit catalyzes the cyclization activity that produces IGP and AICAR from PRFAR using the ammonia provided by the HisH subunit. The chain is Imidazole glycerol phosphate synthase subunit HisF from Francisella philomiragia subsp. philomiragia (strain ATCC 25017 / CCUG 19701 / FSC 153 / O#319-036).